The sequence spans 88 residues: Small ribosomal subunit protein uS15 (88 aa).

The protein belongs to the universal ribosomal protein uS15 family. Part of the 30S ribosomal subunit. Forms a bridge to the 50S subunit in the 70S ribosome, contacting the 23S rRNA.

In terms of biological role, one of the primary rRNA binding proteins, it binds directly to 16S rRNA where it helps nucleate assembly of the platform of the 30S subunit by binding and bridging several RNA helices of the 16S rRNA. Its function is as follows. Forms an intersubunit bridge (bridge B4) with the 23S rRNA of the 50S subunit in the ribosome. The chain is Small ribosomal subunit protein uS15 from Opitutus terrae (strain DSM 11246 / JCM 15787 / PB90-1).